The primary structure comprises 156 residues: S-ribosylhomocysteine lyase (156 aa).

Residues His54, His58, and Cys123 each contribute to the Fe cation site.

It belongs to the LuxS family. Homodimer. Fe cation serves as cofactor.

It carries out the reaction S-(5-deoxy-D-ribos-5-yl)-L-homocysteine = (S)-4,5-dihydroxypentane-2,3-dione + L-homocysteine. Its function is as follows. Involved in the synthesis of autoinducer 2 (AI-2) which is secreted by bacteria and is used to communicate both the cell density and the metabolic potential of the environment. The regulation of gene expression in response to changes in cell density is called quorum sensing. Catalyzes the transformation of S-ribosylhomocysteine (RHC) to homocysteine (HC) and 4,5-dihydroxy-2,3-pentadione (DPD). The sequence is that of S-ribosylhomocysteine lyase from Ligilactobacillus salivarius (strain UCC118) (Lactobacillus salivarius).